The primary structure comprises 149 residues: Large-conductance mechanosensitive channel (149 aa).

Transmembrane regions (helical) follow at residues 8-28 and 74-94; these read FIMR…SAFT and IGSV…LFLI.

Belongs to the MscL family. Homopentamer.

It localises to the cell membrane. In terms of biological role, channel that opens in response to stretch forces in the membrane lipid bilayer. May participate in the regulation of osmotic pressure changes within the cell. This is Large-conductance mechanosensitive channel from Enterococcus faecalis (strain ATCC 700802 / V583).